Here is a 319-residue protein sequence, read N- to C-terminus: Ribonucleoside-diphosphate reductase small chain (319 aa).

3 residues coordinate Fe cation: aspartate 70, glutamate 101, and histidine 104. The active site involves tyrosine 108. Fe cation contacts are provided by glutamate 163, glutamate 197, and histidine 200. Positions 313 to 319 (FSLDVDF) are interaction with R1.

Belongs to the ribonucleoside diphosphate reductase small chain family. As to quaternary structure, interacts with RNR1/OPG080 subunit. Can interact with host RNR1 supunit. It depends on Fe cation as a cofactor.

It catalyses the reaction a 2'-deoxyribonucleoside 5'-diphosphate + [thioredoxin]-disulfide + H2O = a ribonucleoside 5'-diphosphate + [thioredoxin]-dithiol. Functionally, ribonucleoside-diphosphate reductase holoenzyme provides the precursors necessary for viral DNA synthesis. Allows virus growth in non-dividing cells. Catalyzes the biosynthesis of deoxyribonucleotides from the corresponding ribonucleotides. This chain is Ribonucleoside-diphosphate reductase small chain (OPG048), found in Vaccinia virus (strain Ankara) (VACV).